The primary structure comprises 166 residues: Xanthine-guanine phosphoribosyltransferase (166 aa).

Residues Arg-42–Gly-43 and Asp-99–Thr-107 each bind 5-phospho-alpha-D-ribose 1-diphosphate. A Mg(2+)-binding site is contributed by Asp-100. Residues Asp-103 and Ile-146 each contribute to the guanine site. Residues Asp-103 and Ile-146 each contribute to the xanthine site. GMP contacts are provided by residues Asp-103–Thr-107 and Trp-145–Ile-146.

It belongs to the purine/pyrimidine phosphoribosyltransferase family. XGPT subfamily. In terms of assembly, homotetramer. It depends on Mg(2+) as a cofactor.

Its subcellular location is the cell inner membrane. The catalysed reaction is GMP + diphosphate = guanine + 5-phospho-alpha-D-ribose 1-diphosphate. It catalyses the reaction XMP + diphosphate = xanthine + 5-phospho-alpha-D-ribose 1-diphosphate. The enzyme catalyses IMP + diphosphate = hypoxanthine + 5-phospho-alpha-D-ribose 1-diphosphate. Its pathway is purine metabolism; GMP biosynthesis via salvage pathway; GMP from guanine: step 1/1. It functions in the pathway purine metabolism; XMP biosynthesis via salvage pathway; XMP from xanthine: step 1/1. Functionally, purine salvage pathway enzyme that catalyzes the transfer of the ribosyl-5-phosphate group from 5-phospho-alpha-D-ribose 1-diphosphate (PRPP) to the N9 position of the 6-oxopurines guanine and xanthine to form the corresponding ribonucleotides GMP (guanosine 5'-monophosphate) and XMP (xanthosine 5'-monophosphate), with the release of PPi. To a lesser extent, also acts on hypoxanthine. This chain is Xanthine-guanine phosphoribosyltransferase, found in Mesorhizobium japonicum (strain LMG 29417 / CECT 9101 / MAFF 303099) (Mesorhizobium loti (strain MAFF 303099)).